The sequence spans 155 residues: 3-hydroxyacyl-[acyl-carrier-protein] dehydratase FabZ (155 aa).

His59 is a catalytic residue.

Belongs to the thioester dehydratase family. FabZ subfamily.

It localises to the cytoplasm. The catalysed reaction is a (3R)-hydroxyacyl-[ACP] = a (2E)-enoyl-[ACP] + H2O. In terms of biological role, involved in unsaturated fatty acids biosynthesis. Catalyzes the dehydration of short chain beta-hydroxyacyl-ACPs and long chain saturated and unsaturated beta-hydroxyacyl-ACPs. The sequence is that of 3-hydroxyacyl-[acyl-carrier-protein] dehydratase FabZ from Bartonella quintana (strain Toulouse) (Rochalimaea quintana).